A 237-amino-acid polypeptide reads, in one-letter code: MQKKAELYRGKAKTVYTTDDPDLLVLEFRNDTSALDGERIEQFDRKGMVNNKFNHFIMSKLAEAGIPTQMERLLSDTEVLVKKLDMVPVECVVRNRAAGSLVRRLGIEEGLVLNPPLFDLFLKNDAKHDPMVNESYCETFGWVSKEHLAEMKELSLKANEVLSKLFDDAGLILVDFKLEFGLFKGQIVLGDEFSPDGSRLWDKETLDKMDKDRFRQSLGGLIEAYEEVARRIGVILD.

This sequence belongs to the SAICAR synthetase family.

The enzyme catalyses 5-amino-1-(5-phospho-D-ribosyl)imidazole-4-carboxylate + L-aspartate + ATP = (2S)-2-[5-amino-1-(5-phospho-beta-D-ribosyl)imidazole-4-carboxamido]succinate + ADP + phosphate + 2 H(+). It participates in purine metabolism; IMP biosynthesis via de novo pathway; 5-amino-1-(5-phospho-D-ribosyl)imidazole-4-carboxamide from 5-amino-1-(5-phospho-D-ribosyl)imidazole-4-carboxylate: step 1/2. The polypeptide is Phosphoribosylaminoimidazole-succinocarboxamide synthase (Photorhabdus laumondii subsp. laumondii (strain DSM 15139 / CIP 105565 / TT01) (Photorhabdus luminescens subsp. laumondii)).